We begin with the raw amino-acid sequence, 219 residues long: Large ribosomal subunit protein uL4 (219 aa).

The disordered stretch occupies residues 45 to 103 (ARRQGTHATKTRGQVRGGGRKPYRQKGTGRARQGSIRAPQFTGGGTVHGPQPRDYDQRT). The segment covering 62–73 (GGRKPYRQKGTG) has biased composition (basic residues).

Belongs to the universal ribosomal protein uL4 family. In terms of assembly, part of the 50S ribosomal subunit.

In terms of biological role, one of the primary rRNA binding proteins, this protein initially binds near the 5'-end of the 23S rRNA. It is important during the early stages of 50S assembly. It makes multiple contacts with different domains of the 23S rRNA in the assembled 50S subunit and ribosome. Functionally, forms part of the polypeptide exit tunnel. The sequence is that of Large ribosomal subunit protein uL4 from Corynebacterium kroppenstedtii (strain DSM 44385 / JCM 11950 / CIP 105744 / CCUG 35717).